The sequence spans 379 residues: Very late expression factor 1 (379 aa).

A Tyr recombinase domain is found at V169–S348. Residues R210, K239, R303, and H326 contribute to the active site. Y335 acts as the O-(3'-phospho-DNA)-tyrosine intermediate in catalysis. Residues T346–D358 show a composition bias toward acidic residues. Residues T346 to E379 are disordered. Residues N362–E379 show a composition bias toward low complexity.

Belongs to the 'phage' integrase family.

Plays a role in nucleocapsid assembly and serves an essential function during the final stages of the DNA packaging process. Participates in the processing of branched DNA molecules at the late stages of viral genome replication. This Lepidoptera (butterflies and moths) protein is Very late expression factor 1 (VLF-1).